The chain runs to 309 residues: uncharacterized protein (309 aa).

An RPE1 insert domain is found at 9 to 55; sequence NFLYNIANKDGFKGYKECRTSAYKNVFDDSSTKSTSKFHLGISDTKN. A helical membrane pass occupies residues 62-82; that stretch reads IIGLILIIFAGVLFYAYILQH.

The protein belongs to the LicD transferase family.

Its subcellular location is the membrane. This is an uncharacterized protein from Rickettsia typhi (strain ATCC VR-144 / Wilmington).